The chain runs to 496 residues: Probable ATP-dependent DNA helicase RecS (496 aa).

A Helicase ATP-binding domain is found at 25–192 (IESILSGKDT…MNLLELQHAV (168 aa)). An ATP-binding site is contributed by 38–45 (LPTGGGKS). Positions 136 to 139 (DEAH) match the DEAH box motif. In terms of domain architecture, Helicase C-terminal spans 219 to 363 (RVIQLVENLQ…EIADVIRVLE (145 aa)).

This sequence belongs to the helicase family. RecQ subfamily. Interacts with SSB (ssbA) and YpbB.

The protein localises to the cytoplasm. The protein resides in the nucleoid. It carries out the reaction Couples ATP hydrolysis with the unwinding of duplex DNA by translocating in the 3'-5' direction.. It catalyses the reaction ATP + H2O = ADP + phosphate + H(+). In terms of biological role, probable 3'-5' DNA helicase. Required in synaptic and/or post-synaptic stages of recombination. Probably has an overlapping function with RecQ. It probably acts to help generate ss-DNA from ds-DNA breaks. The protein is Probable ATP-dependent DNA helicase RecS of Bacillus subtilis (strain 168).